Consider the following 203-residue polypeptide: Urease accessory protein UreG (203 aa).

10-17 (GPVGAGKT) provides a ligand contact to GTP.

It belongs to the SIMIBI class G3E GTPase family. UreG subfamily. As to quaternary structure, homodimer. UreD, UreF and UreG form a complex that acts as a GTP-hydrolysis-dependent molecular chaperone, activating the urease apoprotein by helping to assemble the nickel containing metallocenter of UreC. The UreE protein probably delivers the nickel.

The protein resides in the cytoplasm. Functionally, facilitates the functional incorporation of the urease nickel metallocenter. This process requires GTP hydrolysis, probably effectuated by UreG. This chain is Urease accessory protein UreG, found in Lachnoclostridium phytofermentans (strain ATCC 700394 / DSM 18823 / ISDg) (Clostridium phytofermentans).